Here is a 124-residue protein sequence, read N- to C-terminus: Small ribosomal subunit protein bS6 (124 aa).

A disordered region spans residues 96–124; it reads ETGPSPMMKEVQREEAKKSAATQPSEAQA. Residues 115 to 124 show a composition bias toward polar residues; sequence AATQPSEAQA.

The protein belongs to the bacterial ribosomal protein bS6 family.

Functionally, binds together with bS18 to 16S ribosomal RNA. The protein is Small ribosomal subunit protein bS6 of Paraburkholderia phytofirmans (strain DSM 17436 / LMG 22146 / PsJN) (Burkholderia phytofirmans).